The following is a 440-amino-acid chain: Thymidine phosphorylase (440 aa).

The protein belongs to the thymidine/pyrimidine-nucleoside phosphorylase family. In terms of assembly, homodimer.

It catalyses the reaction thymidine + phosphate = 2-deoxy-alpha-D-ribose 1-phosphate + thymine. Its pathway is pyrimidine metabolism; dTMP biosynthesis via salvage pathway; dTMP from thymine: step 1/2. In terms of biological role, the enzymes which catalyze the reversible phosphorolysis of pyrimidine nucleosides are involved in the degradation of these compounds and in their utilization as carbon and energy sources, or in the rescue of pyrimidine bases for nucleotide synthesis. In Salmonella agona (strain SL483), this protein is Thymidine phosphorylase.